The primary structure comprises 175 residues: Protein TWIN SISTER of FT (175 aa).

Belongs to the phosphatidylethanolamine-binding protein family.

It localises to the cytoplasm. May form complexes with phosphorylated ligands by interfering with kinases and their effectors. In Arabidopsis thaliana (Mouse-ear cress), this protein is Protein TWIN SISTER of FT (TSF).